The chain runs to 367 residues: Outer membrane porin C (367 aa).

The signal sequence occupies residues 1-21; sequence MKVKVLSLLVPALLVAGAANA. Over 22–33 the chain is Periplasmic; sequence AEVYNKDGNKLD. The beta stranded transmembrane segment at 34-42 threads the bilayer; sequence LYGKVDGLH. The Extracellular portion of the chain corresponds to 43–53; it reads YFSDNKDVDGD. A beta stranded transmembrane segment spans residues 54–63; it reads QTYMRLGFKG. Residues 64 to 73 are Periplasmic-facing; sequence ETQVTDQLTG. Residues 74–84 traverse the membrane as a beta stranded segment; it reads YGQWEYQIQGN. At 85–91 the chain is on the extracellular side; that stretch reads SAENENN. A beta stranded membrane pass occupies residues 92–101; the sequence is SWTRVAFAGL. Over 102–106 the chain is Periplasmic; it reads KFQDV. A beta stranded membrane pass occupies residues 107-115; sequence GSFDYGRNY. Residues 116 to 133 are loop L3; may constrict the pore; sequence GVVYDVTSWTDVLPEFGG. The Extracellular segment spans residues 116-141; sequence GVVYDVTSWTDVLPEFGGDTYGSDNF. Residues 142 to 154 traverse the membrane as a beta stranded segment; that stretch reads MQQRGNGFATYRN. At 155–163 the chain is on the periplasmic side; the sequence is TDFFGLVDG. The chain crosses the membrane as a beta stranded span at residues 164–171; it reads LNFAVQYQ. At 172 to 200 the chain is on the extracellular side; sequence GKNGNPSGEGFTSGVTNNGRDALRQNGDG. The chain crosses the membrane as a beta stranded span at residues 201-207; it reads VGGSITY. Over 208 to 211 the chain is Periplasmic; the sequence is DYEG. The beta stranded transmembrane segment at 212–219 threads the bilayer; that stretch reads FGIGGAIS. The Extracellular segment spans residues 220 to 241; sequence SSKRTDAQNTAAYIGNGDRAET. Residues 242-248 form a beta stranded membrane-spanning segment; it reads YTGGLKY. The Periplasmic segment spans residues 249 to 252; the sequence is DANN. A beta stranded membrane pass occupies residues 253-260; sequence IYLAAQYT. Over 261-269 the chain is Extracellular; that stretch reads QTYNATRVG. A beta stranded transmembrane segment spans residues 270-286; sequence SLGWANKAQNFEAVAQY. At 287 to 291 the chain is on the periplasmic side; it reads QFDFG. Residues 292–299 form a beta stranded membrane-spanning segment; it reads LRPSLAYL. The Extracellular segment spans residues 300–318; the sequence is QSKGKNLGRGYDDEDILKY. The beta stranded transmembrane segment at 319-326 threads the bilayer; it reads VDVGATYY. Topologically, residues 327–330 are periplasmic; the sequence is FNKN. Residues 331-338 form a beta stranded membrane-spanning segment; it reads MSTYVDYK. The Extracellular segment spans residues 339–358; the sequence is INLLDDNQFTRDAGINTDNI. The Mg(2+) site is built by Asn-340, Leu-342, and Thr-355. A beta stranded membrane pass occupies residues 359–366; the sequence is VALGLVYQ. A topological domain (periplasmic) is located at residue Phe-367.

This sequence belongs to the Gram-negative porin family. In terms of assembly, homotrimer. Forms mixed heterotrimers with OmpF and with PhoE; other mixed heterotrimers are also probable.

The protein localises to the cell outer membrane. Functionally, forms pores that allow passive diffusion of small molecules across the outer membrane. (Microbial infection) Supports colicin E5 entry in the absence of its major receptor OmpF. In terms of biological role, (Microbial infection) A mixed OmpC-OmpF heterotrimer is the outer membrane receptor for toxin CdiA-EC536; polymorphisms in extracellular loops 4 and 5 of OmpC confer susceptibility to CdiA-EC536-mediated toxicity. The polypeptide is Outer membrane porin C (ompC) (Escherichia coli (strain K12)).